The chain runs to 305 residues: J domain-containing protein 1 (305 aa).

In terms of domain architecture, J spans Thr91–Ala163. A helical membrane pass occupies residues Trp212–Ile232.

This sequence belongs to the DnaJ family.

The protein localises to the mitochondrion membrane. Its function is as follows. Probable chaperone. This chain is J domain-containing protein 1 (JID1), found in Eremothecium gossypii (strain ATCC 10895 / CBS 109.51 / FGSC 9923 / NRRL Y-1056) (Yeast).